The following is a 1735-amino-acid chain: MKCVASKFNMWLHLGWLLGLLLVLLPLVRCQGWGEPRFETGNVENISLAAYNEAQLQQDVWMVEEMDAPFVLLYINYQGPSEPTIRESPADLDARLQLSEGGRWSIVINRRQDYEVHQRSSLILLAVESTAIPYAIVVNLVNVLDNAPVMTAQGSCEIEELRGDFVTDCLFNVYHADGFEENGIGNSSTNELSFEIGDVAGARDHFTYVPSTVTPSQPIYNKLFNLKVLKQLDYTENAIFNFITTVYDLDRTHSFKMSTIVQVRNVDSRPPIFSRPFTSERIMEKEPFYATVIAIDRDTGLNKPICYELTALVPEYQKYFEIGQTDGKLTVHPIDRDAEQNELYTFTIVAYKCHNRLLNTSSEGAIILLDKNDNIPEIYMKPLELEFWENTIMELPFDELVIHDRDLGENARYEVRLAETVAGVQQTTDSFTIIPGNGYQRVSFTININNATSLDYELPERQTFVLHVTAHEPIEPTHESTQPITIRLKNWNDEVPKFGRDEYQISVPETIGAGELLATVTVTDRDIDDGIRLFALGRLAESLSVTELPVSAEPETNLPLYGFEIATKVGDIFDYDIAKEVIVQLQAEDTLRTAKQESLHQIFSQLTITVIDVNNKPPQITLPRGTMHILENSVPDSAVIIGEEQIAQIIGTDPDTEAELEFSIDWSNSYGTKSGIRAKAETYENCFYIHEEKVNRQRTIGTIRVNPTFPLDVDHEMYDTLFLVIRLVDRNQTILPNTVETVVAIQIDDENDNAPYFDNSTLTVVRSVKERSDSGVTIGNIIAHDIDGPGNNEITFAMEPIDPAHKGWMNIDDNGIVRVEGNRSIDCDIPPIDKVLQNVTISDWKWSNWHVFEIVLMDTNNKQPYHDPFPNDGQVYQFEKIPSNTAIVRVEGKDQDRDVPYHTVSYEINYRDFPQLQRYFEVDSTGRVYVKENNDLLDRDAGLESIMINIVMLDNAGGYDIQNRVSTNINLTLLDINDHTPKLPELAADELKVSENAKQGYIVKTPFAALDLDDKRTPNAKINYYIEEMTPELETPLFSLENIDEYNAVLRVAQDLKGFYGTWTLKIKACDRGSEYEPIIPLTEEPKDNCETRDYELTVEPFNYNTPSITYPSRSAQLRLKYESLQNGRPLVETNGSPLPKFEAIDDDGGIYGDVTFSLTSTNDGEQDHEVFRVDKVDNKTGLLVLENSLAVQPFPKNYSITVIARDGGDRQSEAAIHVVFINMTGEPAFLEPTFDTDFTENEEGRDERRQLPFAEDPKNAGLPPGAETNVYYFIDKTYGNASHLFQLDRVSNVLQLAQLLDREEIPTHEIRIVATNNENGPPDTVLESSPSLLVVRIKVNDVNDNPPVFQQRLYAAGITTNDRVPKALFRVYAEDPDEDEIIRYELVNGTAVGENLQTDGLPFRLHPDSGELTLTSKVQPNQNGYYQLTLIAFDRDDTHNDTVPAKVYIVSESNRVTFVFLNSVEEIDQPDVRKFLAQELTGAYEMECNIDDIDQTTASDGRQAGGSSSALTDVRTHFIQDNQAVEASRIQQRSSNRTFVTVLKTTLRTRGLSLQDVPPLATEALTEADETLQIILIVVSAALAVLCVILFVAFFIKIRSLNRQLKALSATDFGSISSELNGKPTRNVPTTNIFSIEGSNPVLNDNEFRDRMGGSGGGVYDDLSLQSEESDFNDVDRDIFAPKRKESLNPALLEHIRQRSLNPMANGTDKSNDGAPTSNHKKLDETDDELSHRF.

A signal peptide spans 1 to 30; the sequence is MKCVASKFNMWLHLGWLLGLLLVLLPLVRC. Residues 31-1574 are Extracellular-facing; that stretch reads QGWGEPRFET…ALTEADETLQ (1544 aa). An extracellular domain (EC) region spans residues 166–1456; sequence VTDCLFNVYH…KVYIVSESNR (1291 aa). 11 consecutive Cadherin domains span residues 171–273, 280–378, 379–498, 499–620, 621–757, 767–866, 879–983, 985–1109, 1136–1235, 1255–1350, and 1351–1461; these read FNVY…PPIF, ERIM…IPEI, YMKP…VPKF, GRDE…PPQI, TLPR…APYF, SVKE…QPYH, EKIP…TPKL, ELAA…TPSI, GSPL…EPTF, AEDP…PPVF, and QQRL…TFVF. 2 short sequence motifs (toxin-binding receptor motif) span residues 1344-1350 and 1446-1456; these read NDNPPVF and AKVYIVSESNR. The interval 1358–1569 is CR11-MPED, increases toxicity of activated Cry4B toxin, peptide alone is not toxic; that stretch reads GITTNDRVPK…PLATEALTEA (212 aa). The segment at 1457 to 1569 is membrane-proximal EC domain (MPED); sequence VTFVFLNSVE…PLATEALTEA (113 aa). The chain crosses the membrane as a helical span at residues 1575–1595; it reads IILIVVSAALAVLCVILFVAF. Residues 1596–1735 are Cytoplasmic-facing; sequence FIKIRSLNRQ…ETDDELSHRF (140 aa). Positions 1701-1719 are enriched in polar residues; the sequence is SLNPMANGTDKSNDGAPTS. The tract at residues 1701–1735 is disordered; the sequence is SLNPMANGTDKSNDGAPTSNHKKLDETDDELSHRF. The segment covering 1722 to 1735 has biased composition (basic and acidic residues); the sequence is KKLDETDDELSHRF.

Larval midgut (at protein level).

Its subcellular location is the apical cell membrane. It is found in the cell projection. The protein localises to the microvillus membrane. Its function is as follows. Cadherins are calcium-dependent cell adhesion proteins. They preferentially interact with themselves in a homophilic manner in connecting cells. In terms of biological role, (Microbial infection) Binds to and is probably the functional receptor for B.thuringiensis subsp. israelensis (Bti) insecticidal toxin Cry4B. Trichoplusia ni insect cells stably transfected with this protein become suspectible to Cry4B; cells undergo oncosis, they bleb and ruffle after 20-40 minutes, swell after 40-60 minutes and lyse after 90 minutes. Following toxin treatment in the T.in insect system levels of intracellular 3',5'-cyclic AMP (cAMP) rise 12.5-fold; EDTA but not EGTA pretreatment prevents cAMP increase. Inorganic phosphate also rises 3.4-fold after toxin treatment. This Anopheles gambiae (African malaria mosquito) protein is Cadherin-AgCad1.